The sequence spans 353 residues: Endophilin-A3 (353 aa).

Residues 1 to 21 form a membrane-binding amphipathic helix region; it reads MSVAGLKKQFHKASQLFSEKI. Positions 18–249 constitute a BAR domain; it reads SEKISGAEGT…LQNRINVASS (232 aa). The interval 60 to 87 is required for dimerization upon membrane association; sequence PNPAYRAKLGMLNTMSKIRGQVKTTGYP. A coiled-coil region spans residues 180–201; the sequence is DEEVKQAVEKFEESKELAERSM. Positions 218 to 254 are interaction with ARC; the sequence is FVEAALDYHKQSTEILEDLQSKLQNRINVASSRPKRE. An SH3 domain is found at 291–350; it reads VDQPCCQALYDFEPENEGELGFKEGDIITLTNQIDENWYEGMLNGESGFFPHNYVEVMVP.

It belongs to the endophilin family. Interacts with ARC. Interacts with SYNJ1 and DNM1. As to expression, highest level in a region associated with endocytosis of yolk proteins in developing oocytes (at protein level). Highest level in small ovarian follicles. High levels in brain and testis. Lower level in adrenal glands.

The protein resides in the cytoplasm. The protein localises to the early endosome membrane. Functionally, implicated in endocytosis. May recruit other proteins to membranes with high curvature. Implicated in endocytosis of yolk proteins during oogenesis. The sequence is that of Endophilin-A3 from Gallus gallus (Chicken).